A 158-amino-acid polypeptide reads, in one-letter code: Transcriptional repressor NrdR (158 aa).

A zinc finger lies at 3 to 34 (CPFCGSLDTQVIDSRANEAGDAIRRRRRCAAC). The 91-residue stretch at 49 to 139 (PQIVKTNGTR…VYKSFKDPDD (91 aa)) folds into the ATP-cone domain.

It belongs to the NrdR family. Requires Zn(2+) as cofactor.

Functionally, negatively regulates transcription of bacterial ribonucleotide reductase nrd genes and operons by binding to NrdR-boxes. The polypeptide is Transcriptional repressor NrdR (Thiobacillus denitrificans (strain ATCC 25259 / T1)).